Reading from the N-terminus, the 260-residue chain is 3'-5' ssDNA/RNA exonuclease TatD (260 aa).

Residues Glu91, His127, and His152 each contribute to the a divalent metal cation site.

This sequence belongs to the metallo-dependent hydrolases superfamily. TatD-type hydrolase family. TatD subfamily. Monomer. Mg(2+) serves as cofactor.

Its subcellular location is the cytoplasm. Functionally, 3'-5' exonuclease that prefers single-stranded DNA and RNA. May play a role in the H(2)O(2)-induced DNA damage repair. The sequence is that of 3'-5' ssDNA/RNA exonuclease TatD from Shigella flexneri serotype 5b (strain 8401).